The chain runs to 181 residues: Adenylate kinase (181 aa).

Residue 10 to 15 (GAGKGT) coordinates ATP. The segment at 30-59 (STGELFRKNIQDGTKLGIEAKRYLDAGDLV) is NMP. AMP-binding positions include Thr-31, Arg-36, 57 to 59 (DLV), 85 to 88 (GYPR), and Gln-92. An LID region spans residues 126–132 (GRGRADD). Arg-127 contributes to the ATP binding site. The AMP site is built by Arg-129 and Arg-140. Gly-166 contacts ATP.

Belongs to the adenylate kinase family. Monomer.

It is found in the cytoplasm. It catalyses the reaction AMP + ATP = 2 ADP. The protein operates within purine metabolism; AMP biosynthesis via salvage pathway; AMP from ADP: step 1/1. Its function is as follows. Catalyzes the reversible transfer of the terminal phosphate group between ATP and AMP. Plays an important role in cellular energy homeostasis and in adenine nucleotide metabolism. The polypeptide is Adenylate kinase (Mycobacterium marinum (strain ATCC BAA-535 / M)).